A 170-amino-acid polypeptide reads, in one-letter code: Adenine phosphoribosyltransferase (170 aa).

It belongs to the purine/pyrimidine phosphoribosyltransferase family. As to quaternary structure, homodimer.

The protein resides in the cytoplasm. It catalyses the reaction AMP + diphosphate = 5-phospho-alpha-D-ribose 1-diphosphate + adenine. It participates in purine metabolism; AMP biosynthesis via salvage pathway; AMP from adenine: step 1/1. Catalyzes a salvage reaction resulting in the formation of AMP, that is energically less costly than de novo synthesis. This Thermosipho africanus (strain TCF52B) protein is Adenine phosphoribosyltransferase.